The primary structure comprises 302 residues: NAD kinase (302 aa).

Asp79 (proton acceptor) is an active-site residue. NAD(+) contacts are provided by residues Asp79–Gly80, Asn153–Asp154, Arg181, Asp183, Thr194–Ser199, Ala218, and Gln252.

It belongs to the NAD kinase family. A divalent metal cation is required as a cofactor.

The protein localises to the cytoplasm. It carries out the reaction NAD(+) + ATP = ADP + NADP(+) + H(+). Functionally, involved in the regulation of the intracellular balance of NAD and NADP, and is a key enzyme in the biosynthesis of NADP. Catalyzes specifically the phosphorylation on 2'-hydroxyl of the adenosine moiety of NAD to yield NADP. The sequence is that of NAD kinase from Ralstonia nicotianae (strain ATCC BAA-1114 / GMI1000) (Ralstonia solanacearum).